A 160-amino-acid chain; its full sequence is Putative pre-16S rRNA nuclease (160 aa).

It belongs to the YqgF nuclease family.

It is found in the cytoplasm. In terms of biological role, could be a nuclease involved in processing of the 5'-end of pre-16S rRNA. The chain is Putative pre-16S rRNA nuclease from Cereibacter sphaeroides (strain ATCC 17029 / ATH 2.4.9) (Rhodobacter sphaeroides).